Here is a 780-residue protein sequence, read N- to C-terminus: ATP-dependent 6-phosphofructokinase, muscle type (780 aa).

N-acetylthreonine is present on threonine 2. An N-terminal catalytic PFK domain 1 region spans residues 2 to 390 (THEEHHAAKT…NWEVYKLLAH (389 aa)). Residues glycine 25, 88-89 (RC), and 118-121 (GDGS) contribute to the ATP site. Residue aspartate 119 coordinates Mg(2+). Position 133 is a phosphoserine (serine 133). Residues 164–166 (SID), arginine 201, 208–210 (MGR), glutamate 264, arginine 292, and 298–301 (HVQR) contribute to the substrate site. Aspartate 166 functions as the Proton acceptor in the catalytic mechanism. Serine 377 carries the post-translational modification Phosphoserine. The segment at 391–401 (VRPPVSKSGSH) is interdomain linker. A C-terminal regulatory PFK domain 2 region spans residues 402-780 (TVAVMNVGAP…TRKRSGEGAV (379 aa)). Beta-D-fructose 2,6-bisphosphate contacts are provided by residues arginine 471 and 528-532 (TVSNN). Serine 530 carries an O-linked (GlcNAc) serine glycan. Lysine 557 carries the post-translational modification N6-(2-hydroxyisobutyryl)lysine. Residues arginine 566, 573–575 (MGG), glutamate 629, arginine 655, and 661–664 (HMQQ) each bind beta-D-fructose 2,6-bisphosphate. Serine 667 carries the post-translational modification Phosphoserine. Residue arginine 735 participates in beta-D-fructose 2,6-bisphosphate binding. The residue at position 775 (serine 775) is a Phosphoserine.

This sequence belongs to the phosphofructokinase type A (PFKA) family. ATP-dependent PFK group I subfamily. Eukaryotic two domain clade 'E' sub-subfamily. In terms of assembly, homo- and heterotetramers. Phosphofructokinase (PFK) enzyme functions as a tetramer composed of different combinations of 3 types of subunits, called PFKM (M), PFKL (L) and PFKP (P). The composition of the PFK tetramer differs according to the tissue type it is present in. The kinetic and regulatory properties of the tetrameric enzyme are dependent on the subunit composition, hence can vary across tissues. Interacts (via C-terminus) with HK1 (via N-terminal spermatogenic cell-specific region). Requires Mg(2+) as cofactor. Post-translationally, glcNAcylation decreases enzyme activity.

The protein resides in the cytoplasm. The catalysed reaction is beta-D-fructose 6-phosphate + ATP = beta-D-fructose 1,6-bisphosphate + ADP + H(+). It participates in carbohydrate degradation; glycolysis; D-glyceraldehyde 3-phosphate and glycerone phosphate from D-glucose: step 3/4. Its activity is regulated as follows. Allosterically activated by ADP, AMP, or fructose 2,6-bisphosphate, and allosterically inhibited by ATP or citrate. Catalyzes the phosphorylation of D-fructose 6-phosphate to fructose 1,6-bisphosphate by ATP, the first committing step of glycolysis. The polypeptide is ATP-dependent 6-phosphofructokinase, muscle type (PFKM) (Macaca fascicularis (Crab-eating macaque)).